The following is a 128-amino-acid chain: MENVPNVYFNPVFIEPTFKHSLLSVYKHRLIVLFEVFVVFILIYVFFRSELNMFFMHKRKIPDPIDRLRRANLACEDDKLMIYGLPWITTQTSALSINSKPIVYKDCAKLLRSINGSQPVSLNDVLRR.

At Met1–Leu30 the chain is on the intravirion side. A helical; Signal-anchor for type III membrane protein transmembrane segment spans residues Ile31–Leu51. The Virion surface portion of the chain corresponds to Asn52–Cys107. Cys75 and Cys107 are oxidised to a cystine.

It belongs to the orthopoxvirus OPG099 family. In terms of assembly, interacts with OPG086. Component of the entry fusion complex (EFC) composed of OPG053, OPG076, OPG086, OPG094, OPG095, OPG099, OPG107, OPG143, OPG104J5, OPG147 and OPG155. Except for OPG095 and OPG053, each of the EFC proteins is required for assembly or stability of the complex. Post-translationally, most cysteines are linked by disulfide bonds. They are created by the viral disulfide bond formation pathway, a poxvirus-specific redox pathway that operates on the cytoplasmic side of the MV membranes. In terms of processing, unglycosylated because produced in viral factories instead of the classic ER -Golgi route.

It is found in the virion membrane. Functionally, component of the entry fusion complex (EFC), which consists of 11 proteins. During cell infection, this complex mediates entry of the virion core into the host cytoplasm by a two-step mechanism consisting of lipid mixing of the viral and cellular membranes and subsequent pore formation. The sequence is that of Entry-fusion complex protein OPG094 (OPG099) from Homo sapiens (Human).